Here is a 445-residue protein sequence, read N- to C-terminus: MESDNLQDPQEETLTCSICQGIFMNPVYLKCGHKFCEACLLLFQEDIKFPAYCPMCMQPFNQEYINDISLKKQVSIVRKKRLMEYLNSEEHKCVTHKAKKMIFCDKSKILLCHLCSDSQEHSGHTHCSIDVAVQEKMEELLKHMDSLWRRLKIQQNYVEKERRTTLWWLKSMKLREEVIKRVYGKQCPPLSEERDQHIECLRHQSNTTLEELRKSEATIVHERNQLTEVYRELMTMSQRPYQELLVQDLDDLFRRSKLAAKLDMPQGMIPRLRAHSIPGLTARLNSFRVKISFKHSIMFGYTSLRPFDIRLLHESTSLDSAETHRVSWGKKSFSRGKYYWEVDLKDYRRWTVGVCKDPWLRGRSYVATPTDLFLECLRKDDHYILITRIGGEHYIEKPVGQVGVFLDCEGGYVSFVDVAKSSLILSYSPGTFHCAVRPFFSAVYT.

The RING-type zinc finger occupies 16–57; the sequence is CSICQGIFMNPVYLKCGHKFCEACLLLFQEDIKFPAYCPMCM. The B box-type zinc finger occupies 88–129; sequence SEEHKCVTHKAKKMIFCDKSKILLCHLCSDSQEHSGHTHCSI. Positions 93, 96, 115, and 121 each coordinate Zn(2+). In terms of domain architecture, B30.2/SPRY spans 271–445; the sequence is RLRAHSIPGL…VRPFFSAVYT (175 aa).

Belongs to the TRIM/RBCC family.

This is Tripartite motif-containing protein 43B from Mus musculus (Mouse).